We begin with the raw amino-acid sequence, 406 residues long: Terminal uridylyltransferase 7 (406 aa).

Residues 1-15 (MNVAKREFIRGMMAH) constitute a mitochondrion transit peptide. Residues Ser54 and 64–65 (SD) contribute to the UTP site. Residues Asp65 and Asp67 each coordinate Mg(2+). Residues 138 to 142 (GVENS), Lys164, Lys168, and 181 to 183 (NSF) contribute to the UTP site.

This sequence belongs to the DNA polymerase type-B-like family. As to quaternary structure, component of the mitochondrial RNA editing core complex-like (RECC-like), also known as the editosome-like complex; only a small proportion of MEAT1 associates with the complex. Interacts with RNA-editing ligase REL1. Mg(2+) serves as cofactor.

It is found in the mitochondrion matrix. The catalysed reaction is RNA(n) + UTP = RNA(n)-3'-uridine ribonucleotide + diphosphate. Terminal uridylyltransferase which, as part of the mitochondrial RNA editing core-like complex (RECC-like), is involved in the post-transcriptional editing of mitochondrial RNA, a process involving the addition and deletion of uridine (U) nucleotides in the pre-mRNA. Specifically, catalyzes the addition of U to single-stranded RNA with a preference for a 3'-terminal U and adds the number of Us specified by a guide RNA (gRNA) to precleaved double-stranded RNA editing substrates. Essential for insect and bloodstream developmental forms viability. The polypeptide is Terminal uridylyltransferase 7 (Trypanosoma brucei brucei).